The following is a 374-amino-acid chain: Alcohol dehydrogenase class-3 (374 aa).

Ala2 carries the post-translational modification N-acetylalanine. Cys45, His67, Cys97, Cys100, Cys103, Cys111, and Cys174 together coordinate Zn(2+). An N6-succinyllysine modification is found at Lys233. Ser247 is subject to Phosphoserine. Lys315 bears the N6-succinyllysine mark. 2 positions are modified to phosphoserine: Ser324 and Ser351.

It belongs to the zinc-containing alcohol dehydrogenase family. Class-III subfamily. In terms of assembly, homodimer. Zn(2+) serves as cofactor.

Its subcellular location is the cytoplasm. The catalysed reaction is a primary alcohol + NAD(+) = an aldehyde + NADH + H(+). The enzyme catalyses a secondary alcohol + NAD(+) = a ketone + NADH + H(+). It carries out the reaction S-(hydroxymethyl)glutathione + NADP(+) = S-formylglutathione + NADPH + H(+). It catalyses the reaction S-(hydroxymethyl)glutathione + NAD(+) = S-formylglutathione + NADH + H(+). The catalysed reaction is 20-oxo-(5Z,8Z,11Z,14Z)-eicosatetraenoate + NAD(+) + H2O = (5Z,8Z,11Z,14Z)-eicosatetraenedioate + NADH + 2 H(+). The enzyme catalyses 20-hydroxy-(5Z,8Z,11Z,14Z)-eicosatetraenoate + NAD(+) = 20-oxo-(5Z,8Z,11Z,14Z)-eicosatetraenoate + NADH + H(+). It carries out the reaction S-nitrosoglutathione + NADH + H(+) = S-(hydroxysulfenamide)glutathione + NAD(+). In terms of biological role, catalyzes the oxidation of long-chain primary alcohols and the oxidation of S-(hydroxymethyl) glutathione. Also oxidizes long chain omega-hydroxy fatty acids, such as 20-HETE, producing both the intermediate aldehyde, 20-oxoarachidonate and the end product, a dicarboxylic acid, (5Z,8Z,11Z,14Z)-eicosatetraenedioate. Class-III ADH is remarkably ineffective in oxidizing ethanol. Required for clearance of cellular formaldehyde, a cytotoxic and carcinogenic metabolite that induces DNA damage. Also acts as a S-nitroso-glutathione reductase by catalyzing the NADH-dependent reduction of S-nitrosoglutathione, thereby regulating protein S-nitrosylation. The protein is Alcohol dehydrogenase class-3 of Oryctolagus cuniculus (Rabbit).